Here is a 34-residue protein sequence, read N- to C-terminus: NU-buthitoxin-Ptr1a (34 aa).

Intrachain disulfides connect Cys6–Cys27, Cys12–Cys32, and Cys16–Cys34.

As to expression, expressed by the venom gland.

The protein localises to the secreted. Toxin that acts as an agonist on melanocortin receptors (MC1R, MC3R, MC5R, MC5R). After binding to MC1R, the peptide activates the hMC1R/Gs pathway, but after binding to MC4R, it is not able to activate or antagonize the MC4R/Gs pathway. Inhibits melanocyte stimulating hormone (MSH)-binding to human receptors (Ki=2.9 uM to MC1R, Ki=3.9 uM to MC3R, Ki=2.6 uM to MC4R, Ki=2.2 uM to MC5R). This toxin is structurally unrelated to the natural agonists. The chain is NU-buthitoxin-Ptr1a from Parabuthus transvaalicus (Transvaal thick-tailed scorpion).